A 331-amino-acid chain; its full sequence is Doxorubicin resistance ATP-binding protein DrrA (331 aa).

The ABC transporter domain maps to 8 to 240 (VVVNGVRKTY…AGDTFCEIVP (233 aa)). 42 to 49 (GPNGAGKT) contacts ATP.

This sequence belongs to the ABC transporter superfamily. Drug exporter-1 (DrugE1) (TC 3.A.1.105) family. As to quaternary structure, the complex is composed of two ATP-binding proteins (DrrA) and two transmembrane proteins (DrrB and DrrC).

It localises to the cell membrane. Functionally, part of the ABC transporter complex DrrABC involved in doxorubicin resistance. Responsible for energy coupling to the transport system. Binds ATP. The protein is Doxorubicin resistance ATP-binding protein DrrA (drrA) of Mycobacterium tuberculosis (strain CDC 1551 / Oshkosh).